Reading from the N-terminus, the 568-residue chain is MKQSKMFIPTLREVPSDADSKSHQLLLKAGMIKQVASGVYSYLPIAKRVLNKIESIVREEMEAIDGVEILMPALQPSELWSESGRWQSYGAELMRMTDRHGREFALGPTHEEIITSLVRDELKSYKKLPVTLFQIQNKFRDEKRPRFGLLRGREFIMKDAYSFHATEASLDETYQDMYNAYSKIFSRLNLQFRPVIADSGAIGGSHTHEFMALAEIGEDTICYTDGSDYAANIEKAEVVYHPNKKHTEENVLEKVHTPGVKTAQQLADFLKRDLDEIVKSMIVKVDDQFVMFLIRGHHELNDIKVKSFFGTEHVEMATDDDIRSILDASPGSLGPVGVNKIDIYADNSVQDLNNLAVGANEDDYHYVNANVDRDFNVKAYGDFRFILEGEPAADGSGPVKFAEGIEIGQVFKLGTKYSESMNATFLNDQGRAEPMIMGCYGIGVSRTLSAVIEQHNDDKGIIWPTAITPYEVHIISVNPKQEVQKNLADQLYDTYRTQYEVLYDDRAERAGVKFNDADLIGIPVRVVVGKQAADGIVEVKNRRTGDAVEVHIDNLQETIQSIYASFES.

Belongs to the class-II aminoacyl-tRNA synthetase family. ProS type 1 subfamily. As to quaternary structure, homodimer.

Its subcellular location is the cytoplasm. It carries out the reaction tRNA(Pro) + L-proline + ATP = L-prolyl-tRNA(Pro) + AMP + diphosphate. Its function is as follows. Catalyzes the attachment of proline to tRNA(Pro) in a two-step reaction: proline is first activated by ATP to form Pro-AMP and then transferred to the acceptor end of tRNA(Pro). As ProRS can inadvertently accommodate and process non-cognate amino acids such as alanine and cysteine, to avoid such errors it has two additional distinct editing activities against alanine. One activity is designated as 'pretransfer' editing and involves the tRNA(Pro)-independent hydrolysis of activated Ala-AMP. The other activity is designated 'posttransfer' editing and involves deacylation of mischarged Ala-tRNA(Pro). The misacylated Cys-tRNA(Pro) is not edited by ProRS. This Macrococcus caseolyticus (strain JCSC5402) (Macrococcoides caseolyticum) protein is Proline--tRNA ligase.